Here is a 348-residue protein sequence, read N- to C-terminus: WRKY transcription factor WRKY71 (348 aa).

Positions 50 to 84 (VAALEAELKRMGAENRQLSEMLAAVAAKYEALQSQ) form a coiled coil. Disordered regions lie at residues 91–141 (ASAN…APHH) and 246–287 (GEHN…APVV). Residues 102–114 (NQSSTSEGGSVSP) show a composition bias toward low complexity. The Nuclear localization signal signature appears at 116-122 (RKRKSES). Residues 126–136 (SPPPPPPPHPH) show a composition bias toward pro residues. Residues 187–253 (DLSLVVKDGY…YEGEHNHGQP (67 aa)) constitute a DNA-binding region (WRKY). The interval 267 to 348 (SGKSAGKPPH…RILELSPTKD (82 aa)) is transcription repression of gibberellic acid (GA)-induced promoters. The segment covering 275–286 (PHAPAAAPPAPV) has biased composition (pro residues).

It belongs to the WRKY group II-a family. As to quaternary structure, interacts with WRKY51; this interaction promotes W box binding of the complex WRKY51/WRKY71 in a zinc ion-dependent manner. As to expression, highly expressed in aleurone cells. In seeds, predominantly present in the plumule, radicle and scutellum of the embryo. Expressed in roots, stems, young leaves and spikelets.

It is found in the nucleus. Transcription repressor. Interacts specifically with the W box (5'-(T)TGAC[CT]-3'), a frequently occurring elicitor-responsive cis-acting element. Represses specifically gibberellic acid (GA)-induced promoters in aleurone cells, probably by interfering with GAM1. Regulates, probably indirectly, the activation of defense-related genes such as GF14E during defense response. Modulates plant innate immunity against X.oryzae pv. oryzae (Xoo). Confers resistance to the virulent bacterial pathogen X.oryzae pv. oryzae (Xoo) 13751, probably via the regulation of NPR1 and PR1b defense signaling pathways. The sequence is that of WRKY transcription factor WRKY71 from Oryza sativa subsp. indica (Rice).